The chain runs to 220 residues: Charged multivesicular body protein 2a (220 aa).

At Met-1 the chain carries N-acetylmethionine. Coiled coils occupy residues 12 to 52 (EELL…KMAK) and 195 to 220 (RAAE…LRRD). An MIT-interacting motif motif is present at residues 208 to 218 (ADLEERLKNLR).

It belongs to the SNF7 family. As to quaternary structure, probable core component of the endosomal sorting required for transport complex III (ESCRT-III). ESCRT-III components are thought to multimerize to form a flat lattice on the perimeter membrane of the endosome.

The protein localises to the late endosome membrane. It is found in the cytoplasm. Functionally, probable core component of the endosomal sorting required for transport complex III (ESCRT-III) which is involved in multivesicular bodies (MVBs) formation and sorting of endosomal cargo proteins into MVBs. MVBs contain intraluminal vesicles (ILVs) that are generated by invagination and scission from the limiting membrane of the endosome and mostly are delivered to lysosomes enabling degradation of membrane proteins, such as stimulated growth factor receptors, lysosomal enzymes and lipids. The sequence is that of Charged multivesicular body protein 2a (CHMP2A) from Gallus gallus (Chicken).